The following is a 170-amino-acid chain: uncharacterized protein (170 aa).

Residues 15-81 adopt a coiled-coil conformation; the sequence is EAFDEKAEKE…EREKSKSAVS (67 aa). The span at 20–77 shows a compositional bias: basic and acidic residues; it reads KAEKEKVEKEKALKEKTEKEKAEKEKAEKEKVEKEKAEKEKAAKEKAAKEKAEREKSK. The disordered stretch occupies residues 20–95; sequence KAEKEKVEKE…NQNSNKGNVE (76 aa). Residues 78–92 show a composition bias toward polar residues; it reads SAVSPATTNQNSNKG. The helical transmembrane segment at 98–118 threads the bilayer; it reads VAIGVLAGGAVTGVAVGGAYL.

It localises to the membrane. This is an uncharacterized protein from Dictyostelium discoideum (Social amoeba).